Reading from the N-terminus, the 265-residue chain is Indole-3-glycerol phosphate synthase (265 aa).

It belongs to the TrpC family.

It carries out the reaction 1-(2-carboxyphenylamino)-1-deoxy-D-ribulose 5-phosphate + H(+) = (1S,2R)-1-C-(indol-3-yl)glycerol 3-phosphate + CO2 + H2O. The protein operates within amino-acid biosynthesis; L-tryptophan biosynthesis; L-tryptophan from chorismate: step 4/5. This Desulforamulus reducens (strain ATCC BAA-1160 / DSM 100696 / MI-1) (Desulfotomaculum reducens) protein is Indole-3-glycerol phosphate synthase.